Consider the following 315-residue polypeptide: Methionyl-tRNA formyltransferase (315 aa).

(6S)-5,6,7,8-tetrahydrofolate is bound at residue Ser113–Pro116.

It belongs to the Fmt family.

It catalyses the reaction L-methionyl-tRNA(fMet) + (6R)-10-formyltetrahydrofolate = N-formyl-L-methionyl-tRNA(fMet) + (6S)-5,6,7,8-tetrahydrofolate + H(+). In terms of biological role, attaches a formyl group to the free amino group of methionyl-tRNA(fMet). The formyl group appears to play a dual role in the initiator identity of N-formylmethionyl-tRNA by promoting its recognition by IF2 and preventing the misappropriation of this tRNA by the elongation apparatus. In Escherichia coli O45:K1 (strain S88 / ExPEC), this protein is Methionyl-tRNA formyltransferase.